The primary structure comprises 283 residues: Pantothenate synthetase (283 aa).

33–40 (MGALHEGH) serves as a coordination point for ATP. His-40 acts as the Proton donor in catalysis. Gln-64 lines the (R)-pantoate pocket. Gln-64 provides a ligand contact to beta-alanine. 150–153 (GEKD) is an ATP binding site. Gln-156 is a binding site for (R)-pantoate. ATP contacts are provided by residues Ile-179 and 187-190 (MSSR).

The protein belongs to the pantothenate synthetase family. In terms of assembly, homodimer.

It is found in the cytoplasm. It carries out the reaction (R)-pantoate + beta-alanine + ATP = (R)-pantothenate + AMP + diphosphate + H(+). It participates in cofactor biosynthesis; (R)-pantothenate biosynthesis; (R)-pantothenate from (R)-pantoate and beta-alanine: step 1/1. Its function is as follows. Catalyzes the condensation of pantoate with beta-alanine in an ATP-dependent reaction via a pantoyl-adenylate intermediate. The polypeptide is Pantothenate synthetase (Mesorhizobium japonicum (strain LMG 29417 / CECT 9101 / MAFF 303099) (Mesorhizobium loti (strain MAFF 303099))).